The chain runs to 573 residues: 2-succinyl-5-enolpyruvyl-6-hydroxy-3-cyclohexene-1-carboxylate synthase (573 aa).

It belongs to the TPP enzyme family. MenD subfamily. As to quaternary structure, homodimer. Requires Mg(2+) as cofactor. The cofactor is Mn(2+). Thiamine diphosphate is required as a cofactor.

The catalysed reaction is isochorismate + 2-oxoglutarate + H(+) = 5-enolpyruvoyl-6-hydroxy-2-succinyl-cyclohex-3-ene-1-carboxylate + CO2. It functions in the pathway quinol/quinone metabolism; 1,4-dihydroxy-2-naphthoate biosynthesis; 1,4-dihydroxy-2-naphthoate from chorismate: step 2/7. The protein operates within quinol/quinone metabolism; menaquinone biosynthesis. In terms of biological role, catalyzes the thiamine diphosphate-dependent decarboxylation of 2-oxoglutarate and the subsequent addition of the resulting succinic semialdehyde-thiamine pyrophosphate anion to isochorismate to yield 2-succinyl-5-enolpyruvyl-6-hydroxy-3-cyclohexene-1-carboxylate (SEPHCHC). The polypeptide is 2-succinyl-5-enolpyruvyl-6-hydroxy-3-cyclohexene-1-carboxylate synthase (Shewanella sp. (strain ANA-3)).